The chain runs to 309 residues: Putative pyridoxal kinase C6F6.11c (309 aa).

Substrate-binding residues include serine 12 and tyrosine 123. ATP is bound by residues 182–183 (SS) and 209–221 (LIPV…RGTG). Aspartate 222 is a substrate binding site.

This sequence belongs to the pyridoxine kinase family. It depends on a divalent metal cation as a cofactor.

It localises to the cytoplasm. The protein resides in the nucleus. It carries out the reaction pyridoxal + ATP = pyridoxal 5'-phosphate + ADP + H(+). Functionally, required for synthesis of pyridoxal-5-phosphate from vitamin B6. The sequence is that of Putative pyridoxal kinase C6F6.11c from Schizosaccharomyces pombe (strain 972 / ATCC 24843) (Fission yeast).